A 39-amino-acid polypeptide reads, in one-letter code: Photosystem II reaction center protein L (39 aa).

The helical transmembrane segment at 18–38 (SLYLGLLFVFVTGVLMSSYFF) threads the bilayer.

This sequence belongs to the PsbL family. As to quaternary structure, PSII is composed of 1 copy each of membrane proteins PsbA, PsbB, PsbC, PsbD, PsbE, PsbF, PsbH, PsbI, PsbJ, PsbK, PsbL, PsbM, PsbT, PsbX, PsbY, PsbZ, Psb30/Ycf12, peripheral proteins PsbO, CyanoQ (PsbQ), PsbU, PsbV and a large number of cofactors. It forms dimeric complexes.

Its subcellular location is the cellular thylakoid membrane. Its function is as follows. One of the components of the core complex of photosystem II (PSII). PSII is a light-driven water:plastoquinone oxidoreductase that uses light energy to abstract electrons from H(2)O, generating O(2) and a proton gradient subsequently used for ATP formation. It consists of a core antenna complex that captures photons, and an electron transfer chain that converts photonic excitation into a charge separation. This subunit is found at the monomer-monomer interface and is required for correct PSII assembly and/or dimerization. The sequence is that of Photosystem II reaction center protein L from Synechococcus sp. (strain CC9902).